Reading from the N-terminus, the 300-residue chain is uncharacterized protein (300 aa).

A divalent metal cation contacts are provided by Glu146, Glu148, and Asp177.

The protein belongs to the FAH family.

This is an uncharacterized protein from Staphylococcus aureus (strain MW2).